Reading from the N-terminus, the 511-residue chain is Glucans biosynthesis protein G (511 aa).

Residues Met1–Ala22 form the signal peptide.

This sequence belongs to the OpgD/OpgG family.

Its subcellular location is the periplasm. Its pathway is glycan metabolism; osmoregulated periplasmic glucan (OPG) biosynthesis. Its function is as follows. Involved in the biosynthesis of osmoregulated periplasmic glucans (OPGs). This is Glucans biosynthesis protein G from Escherichia coli O8 (strain IAI1).